The sequence spans 104 residues: MDLFKMLGQFKDMQGRMQTMQEEMSQRTFSALAGGGLVTADVDGKMQLKRIKLDASVVNPGDIEMLEDLIVVAVAEAQKKAADAMQMELQKVTGGIDLPFKLPF.

This sequence belongs to the YbaB/EbfC family. Homodimer.

The protein resides in the cytoplasm. Its subcellular location is the nucleoid. In terms of biological role, binds to DNA and alters its conformation. May be involved in regulation of gene expression, nucleoid organization and DNA protection. In Gemmatimonas aurantiaca (strain DSM 14586 / JCM 11422 / NBRC 100505 / T-27), this protein is Nucleoid-associated protein GAU_1113.